We begin with the raw amino-acid sequence, 369 residues long: Putative protein FAM10A5 (369 aa).

Positions 38–98 (MGGKVPPATQ…IEPDTDAPQE (61 aa)) are disordered. Residues 49 to 73 (AKSEENTKEEKPDSKKVEEDLKADE) show a composition bias toward basic and acidic residues. Positions 89–98 (IEPDTDAPQE) are enriched in acidic residues. TPR repeat units lie at residues 114–147 (ANDK…NPRL), 149–181 (ILYA…NPDS), and 183–215 (QPYK…DYDE). The span at 256–272 (KAQEEQERAQREEEARR) shows a compositional bias: basic and acidic residues. Residues 256 to 300 (KAQEEQERAQREEEARRQSGAHYGPFPGGFPGGMPGNFPGGMPGM) form a disordered region. Gly residues predominate over residues 281 to 300 (FPGGFPGGMPGNFPGGMPGM). Positions 319 to 358 (DPEALAAMQDPEVMVAFQDVAQNPANMSKYQSNPKVMNLI) constitute an STI1 domain. The residue at position 346 (Ser-346) is a Phosphoserine. 2 positions are modified to N6-acetyllysine: Lys-353 and Lys-360.

Belongs to the FAM10 family.

Its subcellular location is the cytoplasm. This Homo sapiens (Human) protein is Putative protein FAM10A5 (ST13P5).